The sequence spans 501 residues: Cryptochrome-1 (501 aa).

The Photolyase/cryptochrome alpha/beta domain occupies 5–134; sequence KKTIVWFRRD…SVQSYNGDLC (130 aa). FAD-binding positions include Tyr231 and 243 to 247; that span reads TSLLS. Arg356 contributes to the ATP binding site. Residues Asp386 and Asp388 each coordinate FAD. Asp405 provides a ligand contact to ATP.

The protein belongs to the DNA photolyase class-1 family. In terms of assembly, homodimer. Requires FAD as cofactor. The cofactor is (6R)-5,10-methylene-5,6,7,8-tetrahydrofolate.

Mediates blue light-induced gene expression in addition to its role in blue light-dependent inhibition of stem growth. The chain is Cryptochrome-1 (PHR1) from Sinapis alba (White mustard).